Consider the following 89-residue polypeptide: Small ribosomal subunit protein uS15 (89 aa).

Belongs to the universal ribosomal protein uS15 family. In terms of assembly, part of the 30S ribosomal subunit. Forms a bridge to the 50S subunit in the 70S ribosome, contacting the 23S rRNA.

Functionally, one of the primary rRNA binding proteins, it binds directly to 16S rRNA where it helps nucleate assembly of the platform of the 30S subunit by binding and bridging several RNA helices of the 16S rRNA. Forms an intersubunit bridge (bridge B4) with the 23S rRNA of the 50S subunit in the ribosome. The polypeptide is Small ribosomal subunit protein uS15 (Cupriavidus necator (strain ATCC 17699 / DSM 428 / KCTC 22496 / NCIMB 10442 / H16 / Stanier 337) (Ralstonia eutropha)).